A 685-amino-acid chain; its full sequence is Iron(3+)-hydroxamate import system permease protein FhuB (685 aa).

The next 18 helical transmembrane spans lie at Ala-35–Val-55, Leu-87–Val-107, Val-120–Leu-140, Gln-143–Gly-163, Ile-172–Phe-192, Gln-222–Leu-242, Ala-265–Phe-285, Leu-302–Trp-322, Met-328–Leu-348, Leu-373–Phe-393, Trp-416–Ile-436, Ala-456–Leu-476, Gly-479–Phe-499, Met-504–Ala-524, Ala-553–Leu-573, Ile-592–Leu-612, Met-632–Cys-652, and Tyr-660–Leu-680.

It belongs to the binding-protein-dependent transport system permease family. FecCD subfamily. In terms of assembly, the complex is composed of two ATP-binding proteins (FhuC), a transmembrane protein (FhuB) and a solute-binding protein (FhuD).

It localises to the cell inner membrane. Its function is as follows. Part of the ABC transporter complex FhuCDB involved in iron(3+)-hydroxamate import. Responsible for the translocation of the substrate across the membrane. Involved in ferrioxamine-mediated iron(III) utilization. The protein is Iron(3+)-hydroxamate import system permease protein FhuB (fhuB) of Salmonella typhimurium (strain LT2 / SGSC1412 / ATCC 700720).